We begin with the raw amino-acid sequence, 111 residues long: uncharacterized protein (111 aa).

This sequence belongs to the UPF0440 family.

This is an uncharacterized protein from Pyrococcus furiosus (strain ATCC 43587 / DSM 3638 / JCM 8422 / Vc1).